A 288-amino-acid chain; its full sequence is DegV domain-containing protein MYPU_3590 (288 aa).

The DegV domain maps to 3 to 275 (IAIVIDSSSG…LGAIAISLVK (273 aa)). 2 residues coordinate hexadecanoate: S61 and S92.

Functionally, may bind long-chain fatty acids, such as palmitate, and may play a role in lipid transport or fatty acid metabolism. The polypeptide is DegV domain-containing protein MYPU_3590 (Mycoplasmopsis pulmonis (strain UAB CTIP) (Mycoplasma pulmonis)).